Here is a 211-residue protein sequence, read N- to C-terminus: N-(5'-phosphoribosyl)anthranilate isomerase (211 aa).

It belongs to the TrpF family.

The enzyme catalyses N-(5-phospho-beta-D-ribosyl)anthranilate = 1-(2-carboxyphenylamino)-1-deoxy-D-ribulose 5-phosphate. The protein operates within amino-acid biosynthesis; L-tryptophan biosynthesis; L-tryptophan from chorismate: step 3/5. This chain is N-(5'-phosphoribosyl)anthranilate isomerase, found in Pseudomonas aeruginosa (strain UCBPP-PA14).